The primary structure comprises 359 residues: GTP cyclohydrolase FolE2 (359 aa).

This sequence belongs to the GTP cyclohydrolase IV family.

The catalysed reaction is GTP + H2O = 7,8-dihydroneopterin 3'-triphosphate + formate + H(+). It participates in cofactor biosynthesis; 7,8-dihydroneopterin triphosphate biosynthesis; 7,8-dihydroneopterin triphosphate from GTP: step 1/1. Converts GTP to 7,8-dihydroneopterin triphosphate. This chain is GTP cyclohydrolase FolE2, found in Cereibacter sphaeroides (strain ATCC 17025 / ATH 2.4.3) (Rhodobacter sphaeroides).